Reading from the N-terminus, the 1358-residue chain is Nonribosomal peptide synthetase rstn8 (1358 aa).

Residues 1–23 form a disordered region; that stretch reads MSHSSHYSPVDSGMVPSSSSTED. The tract at residues 261–659 is adenylation; it reads YRELDRLSSR…LGEVEYRLHQ (399 aa). Positions 795–872 constitute a Carrier domain; sequence ETVSPAESTL…DQASLVRPLV (78 aa). S832 is subject to O-(pantetheine 4'-phosphoryl)serine. Residues 909 to 1322 are condensation; that stretch reads EDIYPCTPLQ…DDYSQALHEL (414 aa).

It belongs to the NRP synthetase family. The cofactor is pantetheine 4'-phosphate.

It catalyses the reaction restrictinol + glycine + H(+) = restricticin + H2O. It functions in the pathway antifungal biosynthesis. Functionally, nonribosomal peptide synthetase; part of the gene cluster that mediates the biosynthesis of the tetrahydropyranyl antifungal agent restricticin that acts as an inhibitor of CYP51 and blocks the ergosterol biosynthesis. Within the pathway, rstn8 catalyzes the C3 esterification of restrictinol with glycine to yield restricticin. Rstn8 represents an example of the emerging class of single-module NRPS-like enzymes that perform esterification reactions. Rstn8 displays strict substrate specificity toward glycine as no other natural amino acid is accepted. Rstn8 does not recognize desmethylrestrictinol as a substrate, demonstrating that rstn1-catalyzed methylation, possibly protecting the C4-OH, must precede the final esterification step. The highly reducing polyketide synthase rstn3, the short chain dehydrogenase rstn4, the cyclase rstn5, the FAD-dependent monooxygenase rstn6 and the enoylreductase rstn7 are required to generate the first stable intermediate desmethylrestrictinol. Rstn3 with rstn7 biosynthesize the first polyketide chain intermediate that is reduced by rstn4, followed by epoxidation by rstn6 before 6-endo cyclization via epoxide opening by rstn5 leads to desmethylrestrictinol. The methyltransferase rstn1 then catalyzes the C4 O-methylation of desmethylrestrictinol to produce restrictinol, and the nonribosomal peptide synthetase rstn8 catalyzes the C3 esterification of restrictinol with glycine that leads to restricticin. The polypeptide is Nonribosomal peptide synthetase rstn8 (Aspergillus nomiae NRRL (strain ATCC 15546 / NRRL 13137 / CBS 260.88 / M93)).